The primary structure comprises 398 residues: Dual-specificity RNA methyltransferase RlmN (398 aa).

Glu-119 (proton acceptor) is an active-site residue. Residues 125–364 enclose the Radical SAM core domain; it reads DGDRATLCVS…TIVRKTRGDD (240 aa). A disulfide bridge connects residues Cys-132 and Cys-369. [4Fe-4S] cluster contacts are provided by Cys-139, Cys-143, and Cys-146. S-adenosyl-L-methionine contacts are provided by residues 193 to 194, Ser-225, 247 to 249, and Asn-326; these read GE and SLH. Residue Cys-369 is the S-methylcysteine intermediate of the active site.

This sequence belongs to the radical SAM superfamily. RlmN family. [4Fe-4S] cluster is required as a cofactor.

Its subcellular location is the cytoplasm. It catalyses the reaction adenosine(2503) in 23S rRNA + 2 reduced [2Fe-2S]-[ferredoxin] + 2 S-adenosyl-L-methionine = 2-methyladenosine(2503) in 23S rRNA + 5'-deoxyadenosine + L-methionine + 2 oxidized [2Fe-2S]-[ferredoxin] + S-adenosyl-L-homocysteine. The catalysed reaction is adenosine(37) in tRNA + 2 reduced [2Fe-2S]-[ferredoxin] + 2 S-adenosyl-L-methionine = 2-methyladenosine(37) in tRNA + 5'-deoxyadenosine + L-methionine + 2 oxidized [2Fe-2S]-[ferredoxin] + S-adenosyl-L-homocysteine. Its function is as follows. Specifically methylates position 2 of adenine 2503 in 23S rRNA and position 2 of adenine 37 in tRNAs. m2A2503 modification seems to play a crucial role in the proofreading step occurring at the peptidyl transferase center and thus would serve to optimize ribosomal fidelity. This is Dual-specificity RNA methyltransferase RlmN from Serratia proteamaculans (strain 568).